A 101-amino-acid polypeptide reads, in one-letter code: Large ribosomal subunit protein uL24 (101 aa).

This sequence belongs to the universal ribosomal protein uL24 family. Part of the 50S ribosomal subunit.

Its function is as follows. One of two assembly initiator proteins, it binds directly to the 5'-end of the 23S rRNA, where it nucleates assembly of the 50S subunit. Functionally, one of the proteins that surrounds the polypeptide exit tunnel on the outside of the subunit. The chain is Large ribosomal subunit protein uL24 from Streptococcus agalactiae serotype III (strain NEM316).